The chain runs to 220 residues: Deoxyribose-phosphate aldolase 1 (220 aa).

Asp89 (proton donor/acceptor) is an active-site residue. The active-site Schiff-base intermediate with acetaldehyde is Lys151. Catalysis depends on Lys180, which acts as the Proton donor/acceptor.

It belongs to the DeoC/FbaB aldolase family. DeoC type 1 subfamily.

The protein resides in the cytoplasm. It carries out the reaction 2-deoxy-D-ribose 5-phosphate = D-glyceraldehyde 3-phosphate + acetaldehyde. The protein operates within carbohydrate degradation; 2-deoxy-D-ribose 1-phosphate degradation; D-glyceraldehyde 3-phosphate and acetaldehyde from 2-deoxy-alpha-D-ribose 1-phosphate: step 2/2. In terms of biological role, catalyzes a reversible aldol reaction between acetaldehyde and D-glyceraldehyde 3-phosphate to generate 2-deoxy-D-ribose 5-phosphate. The sequence is that of Deoxyribose-phosphate aldolase 1 from Mesoplasma florum (strain ATCC 33453 / NBRC 100688 / NCTC 11704 / L1) (Acholeplasma florum).